Here is a 452-residue protein sequence, read N- to C-terminus: Maltoporin (452 aa).

Positions 1–25 (MMITLRKLPLAVAVAAGVMSAQAMA) are cleaved as a signal peptide.

The protein belongs to the porin LamB (TC 1.B.3) family. Homotrimer formed of three 18-stranded antiparallel beta-barrels, containing three independent channels.

It is found in the cell outer membrane. It carries out the reaction beta-maltose(in) = beta-maltose(out). Functionally, involved in the transport of maltose and maltodextrins. This Salmonella paratyphi A (strain ATCC 9150 / SARB42) protein is Maltoporin.